Here is a 161-residue protein sequence, read N- to C-terminus: Peptidyl-prolyl cis-trans isomerase-like 1 (161 aa).

Residues 1 to 155 (MATDVVFDTS…DEVKIIRAKV (155 aa)) form the PPIase cyclophilin-type domain.

Belongs to the cyclophilin-type PPIase family. PPIL1 subfamily.

It catalyses the reaction [protein]-peptidylproline (omega=180) = [protein]-peptidylproline (omega=0). PPIases accelerate the folding of proteins. It catalyzes the cis-trans isomerization of proline imidic peptide bonds in oligopeptides. This chain is Peptidyl-prolyl cis-trans isomerase-like 1 (cyp1), found in Aspergillus fumigatus (strain ATCC MYA-4609 / CBS 101355 / FGSC A1100 / Af293) (Neosartorya fumigata).